The following is a 101-amino-acid chain: Putative metal transport protein HQ_3622A (101 aa).

The signal sequence occupies residues 1–32 (MKIISMSMDSWIQRAALMLLGLVIVAPFFGWT). A helical transmembrane segment spans residues 75–95 (IGTLISAGVGTVLTLIVAFGA).

It localises to the cell membrane. In terms of biological role, may be involved in metal transport. The sequence is that of Putative metal transport protein HQ_3622A from Haloquadratum walsbyi (strain DSM 16790 / HBSQ001).